A 225-amino-acid chain; its full sequence is MARSIIAVLPAAGVGSRMQADKPKQYLTLLGKTLLEHTLDVMLSYPAVSKIILAVSKDDPYISTLSLDPKIQLVEGGTTRAESVLNGLNVIAEKNAWVLVHDAARPCLQHADIDKLLAIEDKQGAILAIPVTDTIKRADNQQCIVKTEDRSQLWQAMTPQFFPVDILRDALSTGIQQGANITDEASAIELAGFRPHLVAGRSDNLKVTRPEDLALAEFYLTRNKL.

The protein belongs to the IspD/TarI cytidylyltransferase family. IspD subfamily.

It carries out the reaction 2-C-methyl-D-erythritol 4-phosphate + CTP + H(+) = 4-CDP-2-C-methyl-D-erythritol + diphosphate. The protein operates within isoprenoid biosynthesis; isopentenyl diphosphate biosynthesis via DXP pathway; isopentenyl diphosphate from 1-deoxy-D-xylulose 5-phosphate: step 2/6. Functionally, catalyzes the formation of 4-diphosphocytidyl-2-C-methyl-D-erythritol from CTP and 2-C-methyl-D-erythritol 4-phosphate (MEP). In Haemophilus influenzae (strain PittEE), this protein is 2-C-methyl-D-erythritol 4-phosphate cytidylyltransferase.